Here is a 272-residue protein sequence, read N- to C-terminus: 2,3,4,5-tetrahydropyridine-2,6-dicarboxylate N-succinyltransferase (272 aa).

2 residues coordinate substrate: arginine 104 and aspartate 141.

It belongs to the transferase hexapeptide repeat family. Homotrimer.

The protein resides in the cytoplasm. It catalyses the reaction (S)-2,3,4,5-tetrahydrodipicolinate + succinyl-CoA + H2O = (S)-2-succinylamino-6-oxoheptanedioate + CoA. It functions in the pathway amino-acid biosynthesis; L-lysine biosynthesis via DAP pathway; LL-2,6-diaminopimelate from (S)-tetrahydrodipicolinate (succinylase route): step 1/3. The polypeptide is 2,3,4,5-tetrahydropyridine-2,6-dicarboxylate N-succinyltransferase (Alkalilimnicola ehrlichii (strain ATCC BAA-1101 / DSM 17681 / MLHE-1)).